Here is a 287-residue protein sequence, read N- to C-terminus: Pantothenate synthetase (287 aa).

30 to 37 (MGNLHSGH) lines the ATP pocket. The active-site Proton donor is His37. Gln61 contributes to the (R)-pantoate binding site. Gln61 contacts beta-alanine. An ATP-binding site is contributed by 149 to 152 (GEKD). Gln155 is a binding site for (R)-pantoate. Residues Val178 and 186–189 (LSSR) contribute to the ATP site.

Belongs to the pantothenate synthetase family. In terms of assembly, homodimer.

The protein localises to the cytoplasm. The catalysed reaction is (R)-pantoate + beta-alanine + ATP = (R)-pantothenate + AMP + diphosphate + H(+). The protein operates within cofactor biosynthesis; (R)-pantothenate biosynthesis; (R)-pantothenate from (R)-pantoate and beta-alanine: step 1/1. In terms of biological role, catalyzes the condensation of pantoate with beta-alanine in an ATP-dependent reaction via a pantoyl-adenylate intermediate. The polypeptide is Pantothenate synthetase (Pseudomonas putida (strain W619)).